The chain runs to 346 residues: tRNA N6-adenosine threonylcarbamoyltransferase (346 aa).

Positions 111 and 115 each coordinate Fe cation. Substrate-binding positions include 134-138 (LVSGG), Asp167, Gly180, and Asn279. Asp307 serves as a coordination point for Fe cation.

It belongs to the KAE1 / TsaD family. Requires Fe(2+) as cofactor.

It localises to the cytoplasm. The catalysed reaction is L-threonylcarbamoyladenylate + adenosine(37) in tRNA = N(6)-L-threonylcarbamoyladenosine(37) in tRNA + AMP + H(+). Its function is as follows. Required for the formation of a threonylcarbamoyl group on adenosine at position 37 (t(6)A37) in tRNAs that read codons beginning with adenine. Is involved in the transfer of the threonylcarbamoyl moiety of threonylcarbamoyl-AMP (TC-AMP) to the N6 group of A37, together with TsaE and TsaB. TsaD likely plays a direct catalytic role in this reaction. This chain is tRNA N6-adenosine threonylcarbamoyltransferase, found in Burkholderia cenocepacia (strain ATCC BAA-245 / DSM 16553 / LMG 16656 / NCTC 13227 / J2315 / CF5610) (Burkholderia cepacia (strain J2315)).